The primary structure comprises 193 residues: Probable thymidylate kinase (193 aa).

7–14 (GIDGSGKT) serves as a coordination point for ATP.

The protein belongs to the thymidylate kinase family.

It catalyses the reaction dTMP + ATP = dTDP + ADP. This is Probable thymidylate kinase from Pyrobaculum calidifontis (strain DSM 21063 / JCM 11548 / VA1).